Reading from the N-terminus, the 5202-residue chain is Usherin (5202 aa).

A signal peptide spans 1–31 (MNCPVLSLGSGFLFQVIEMLIFAYFASISLT). Topologically, residues 32 to 5042 (ESRGLFPRLE…KSTEFYSELW (5011 aa)) are extracellular. Residues 271–517 (QDFRLYQVAL…AVDEITISGR (247 aa)) enclose the Laminin N-terminal domain. N-linked (GlcNAc...) asparagine glycans are attached at residues Asn-361 and Asn-451. Disulfide bonds link Cys-518/Cys-527, Cys-520/Cys-536, Cys-538/Cys-549, Cys-552/Cys-572, Cys-575/Cys-584, Cys-577/Cys-605, Cys-608/Cys-617, Cys-620/Cys-638, Cys-641/Cys-655, Cys-643/Cys-662, Cys-664/Cys-673, Cys-676/Cys-691, Cys-694/Cys-708, Cys-696/Cys-715, Cys-717/Cys-726, Cys-729/Cys-744, Cys-747/Cys-759, Cys-749/Cys-766, Cys-768/Cys-777, Cys-780/Cys-792, Cys-795/Cys-808, Cys-797/Cys-815, Cys-817/Cys-826, Cys-829/Cys-844, Cys-847/Cys-861, Cys-849/Cys-868, Cys-870/Cys-879, Cys-882/Cys-897, Cys-900/Cys-913, Cys-902/Cys-920, Cys-922/Cys-931, Cys-934/Cys-948, Cys-951/Cys-963, Cys-953/Cys-970, Cys-972/Cys-982, Cys-985/Cys-999, Cys-1002/Cys-1014, Cys-1004/Cys-1021, Cys-1023/Cys-1032, and Cys-1035/Cys-1050. Laminin EGF-like domains are found at residues 518–574 (CQCH…NCKP), 575–640 (CQCN…VCKP), 641–693 (CDCD…GCSP), 694–746 (CNCN…GCEP), 747–794 (CQCN…NCKA), 795–846 (CDCD…LCLP), 847–899 (CNCD…HCQM), 900–950 (CECD…GCLP), 951–1001 (CSCH…RCQP), and 1002–1052 (CNCH…GCSK). Asn-587 and Asn-611 each carry an N-linked (GlcNAc...) asparagine glycan. N-linked (GlcNAc...) asparagine glycosylation is present at Asn-650. Asn-697 is a glycosylation site (N-linked (GlcNAc...) asparagine). 3 N-linked (GlcNAc...) asparagine glycosylation sites follow: Asn-839, Asn-856, and Asn-862. Asn-888 carries an N-linked (GlcNAc...) asparagine glycan. A glycan (N-linked (GlcNAc...) asparagine) is linked at Asn-944. Residue Asn-1011 is glycosylated (N-linked (GlcNAc...) asparagine). 4 consecutive Fibronectin type-III domains span residues 1058–1146 (PPPR…TKPG), 1148–1244 (PEGN…APPQ), 1245–1363 (RLSP…SAPV), and 1364–1468 (FMIP…AAPA). 3 N-linked (GlcNAc...) asparagine glycosylation sites follow: Asn-1071, Asn-1151, and Asn-1174. Asn-1379, Asn-1388, Asn-1479, and Asn-1635 each carry an N-linked (GlcNAc...) asparagine glycan. Laminin G-like domains are found at residues 1517-1709 (MKGI…WEGC) and 1714-1891 (NEGA…LDGC). Cys-1672 and Cys-1709 are oxidised to a cystine. A glycan (N-linked (GlcNAc...) asparagine) is linked at Asn-1779. Cys-1862 and Cys-1891 are disulfide-bonded. 14 Fibronectin type-III domains span residues 1869 to 1955 (TRGA…AAPQ), 1957 to 2054 (VPTP…TPQE), 2055 to 2144 (APQE…LPPE), 2145 to 2239 (HVDS…TDED), 2243 to 2330 (GVPA…APPE), 2331 to 2433 (GTVN…MPPG), 2437 to 2531 (GVLP…TAED), 2535 to 2622 (PVVP…TLPG), 2624 to 2722 (PEGI…TRPS), 2726 to 2819 (GVQP…THPT), 2820 to 2923 (VPQN…TLAG), 2927 to 3018 (RGAN…TCDG), 3022 to 3112 (GMLP…TPSD), and 3113 to 3209 (IPTP…CCEE). Asn-1903, Asn-2011, Asn-2014, Asn-2048, Asn-2130, Asn-2182, Asn-2195, Asn-2258, Asn-2285, Asn-2322, Asn-2377, Asn-2382, Asn-2407, and Asn-2413 each carry an N-linked (GlcNAc...) asparagine glycan. Asn-2581, Asn-2584, Asn-2656, Asn-2710, Asn-2770, and Asn-2788 each carry an N-linked (GlcNAc...) asparagine glycan. N-linked (GlcNAc...) asparagine glycans are attached at residues Asn-2930, Asn-2937, Asn-2970, Asn-3032, and Asn-3099. N-linked (GlcNAc...) asparagine glycans are attached at residues Asn-3217, Asn-3330, Asn-3419, and Asn-3433. Cystine bridges form between Cys-3371/Cys-3444 and Cys-3399/Cys-3425. 16 Fibronectin type-III domains span residues 3403-3497 (CPAS…TKED), 3501-3589 (GVSP…TQGV), 3592-3682 (SILP…AAPE), 3684-3770 (VWVT…TPMS), 3774-3865 (EIYP…TPEA), 3866-3963 (APMD…TLEA), 3964-4067 (PPQD…SSPS), 4068-4153 (GLRN…TDEA), 4157-4261 (SQLA…TLQA), 4262-4357 (PPEG…AAPS), 4358-4445 (EVSP…ALPE), 4446-4530 (NMDS…TSPS), 4534-4630 (GMEP…TPEI), 4636-4733 (PPPH…TGPA), 4734-4827 (PPEG…THPA), and 4828-4927 (PPSG…SFTT). Residues Asn-3653, Asn-3694, Asn-3733, Asn-3780, and Asn-3849 are each glycosylated (N-linked (GlcNAc...) asparagine). N-linked (GlcNAc...) asparagine glycosylation occurs at Asn-3984. 4 N-linked (GlcNAc...) asparagine glycosylation sites follow: Asn-4202, Asn-4226, Asn-4317, and Asn-4418. Residues 4518–4541 (ILSPLVKDRTSPSAPSGMEPPKLQ) form a disordered region. Asn-4564, Asn-4583, Asn-4691, Asn-4754, and Asn-4800 each carry an N-linked (GlcNAc...) asparagine glycan. 2 N-linked (GlcNAc...) asparagine glycosylation sites follow: Asn-4943 and Asn-4950. The chain crosses the membrane as a helical span at residues 5043 to 5063 (FIVLMAMLGLILLAIFLSLIL). At 5064–5202 (QRKIHKEPYI…ERTTFTDTHL (139 aa)) the chain is on the cytoplasmic side. A PDZ-binding motif is present at residues 5200–5202 (THL).

In terms of assembly, interacts with collagen IV and fibronectin via its laminin EGF-like domains. Interaction with collagen may be required for stable integration into the basement membrane. Interacts with NINL. Interacts with USH1C. Component of USH2 complex, composed of ADGRV1, PDZD7, USH2A and WHRN. Interacts with ADGRV1/MASS1 (via N-terminal PDZ domain). Interacts (via the cytoplasmic region) with WHRN. Interacts (via the cytoplasmic region) with PDZD7. Interacts (via the cytoplasmic region) with VEZT and MYO7A (via MyTH4-FERM domains); the interaction associates VEZT with the USH2 complex at the stereocilia base. In terms of tissue distribution, present in the basement membrane of many, but not all tissues. Expressed in retina, cochlea, small and large intestine, pancreas, bladder, prostate, esophagus, trachea, thymus, salivary glands, placenta, ovary, fallopian tube, uterus and testis. Absent in many other tissues such as heart, lung, liver, kidney and brain. In the retina, it is present in the basement membranes in the Bruch's layer choroid capillary basement membranes, where it localizes just beneath the retinal pigment epithelial cells (at protein level). Weakly expressed. Isoform 2 is expressed in fetal eye, cochlea and heart, and at very low level in brain, CNS, intestine, skeleton, tongue, kidney and lung. Isoform 2 is not expressed in stomach and liver. In adult tissues, isoform 2 is expressed in neural retina and testis, and at low level in brain, heart, kidney and liver. Isoform 1 displays a similar pattern of expression but is expressed at very low level in fetal cochlea.

The protein localises to the cell projection. The protein resides in the stereocilium membrane. Its subcellular location is the secreted. In terms of biological role, involved in hearing and vision as member of the USH2 complex. In the inner ear, required for the maintenance of the hair bundle ankle formation, which connects growing stereocilia in developing cochlear hair cells. In retina photoreceptors, the USH2 complex is required for the maintenance of periciliary membrane complex that seems to play a role in regulating intracellular protein transport. The polypeptide is Usherin (USH2A) (Homo sapiens (Human)).